The sequence spans 244 residues: 6-carboxyhexanoate--CoA ligase (244 aa).

It belongs to the BioW family. As to quaternary structure, homodimer. Mg(2+) is required as a cofactor.

It catalyses the reaction heptanedioate + ATP + CoA = 6-carboxyhexanoyl-CoA + AMP + diphosphate. Its pathway is metabolic intermediate metabolism; pimeloyl-CoA biosynthesis; pimeloyl-CoA from pimelate: step 1/1. Functionally, catalyzes the transformation of pimelate into pimeloyl-CoA with concomitant hydrolysis of ATP to AMP. This Methanococcus maripaludis (strain C7 / ATCC BAA-1331) protein is 6-carboxyhexanoate--CoA ligase.